The sequence spans 298 residues: Acetyl-coenzyme A carboxylase carboxyl transferase subunit beta 1 (298 aa).

One can recognise a CoA carboxyltransferase N-terminal domain in the interval 26 to 294 (MWVKCPSCGD…RAADVQNAPA (269 aa)). The Zn(2+) site is built by Cys30, Cys33, Cys49, and Cys51. The C4-type zinc-finger motif lies at 30 to 51 (CPSCGDLIYTRQFSDNLKVCKC).

It belongs to the AccD/PCCB family. As to quaternary structure, acetyl-CoA carboxylase is a heterohexamer composed of biotin carboxyl carrier protein (AccB), biotin carboxylase (AccC) and two subunits each of ACCase subunit alpha (AccA) and ACCase subunit beta (AccD). Requires Zn(2+) as cofactor.

The protein localises to the cytoplasm. The catalysed reaction is N(6)-carboxybiotinyl-L-lysyl-[protein] + acetyl-CoA = N(6)-biotinyl-L-lysyl-[protein] + malonyl-CoA. Its pathway is lipid metabolism; malonyl-CoA biosynthesis; malonyl-CoA from acetyl-CoA: step 1/1. Its function is as follows. Component of the acetyl coenzyme A carboxylase (ACC) complex. Biotin carboxylase (BC) catalyzes the carboxylation of biotin on its carrier protein (BCCP) and then the CO(2) group is transferred by the transcarboxylase to acetyl-CoA to form malonyl-CoA. The chain is Acetyl-coenzyme A carboxylase carboxyl transferase subunit beta 1 from Roseiflexus castenholzii (strain DSM 13941 / HLO8).